Here is a 303-residue protein sequence, read N- to C-terminus: tRNA pseudouridine synthase B (303 aa).

The active-site Nucleophile is aspartate 47.

The protein belongs to the pseudouridine synthase TruB family. Type 1 subfamily.

The enzyme catalyses uridine(55) in tRNA = pseudouridine(55) in tRNA. Its function is as follows. Responsible for synthesis of pseudouridine from uracil-55 in the psi GC loop of transfer RNAs. The polypeptide is tRNA pseudouridine synthase B (Legionella pneumophila (strain Paris)).